A 281-amino-acid chain; its full sequence is Lectin (281 aa).

Positions Met1 to Ser26 are cleaved as a signal peptide. N-linked (GlcNAc...) asparagine glycosylation is found at Asn43 and Asn139. Positions Ala269–Ile281 are excised as a propeptide.

Belongs to the leguminous lectin family. In terms of assembly, homodimer. Post-translationally, a minor C-terminal proteolytic processing site is observed at position 268.

Functionally, galactose and N-acetyllactosamine specific lectin. Binds to the H-2 blood type determinant fucosyl-N-acetyllactosamine. The sequence is that of Lectin from Erythrina corallodendron (Coral tree).